We begin with the raw amino-acid sequence, 715 residues long: MHMFEIHREEIEWAGRKLVLETGKIARQADGAIFATYGETTVLATVVSAKSVKPGVDFFPLTVNYQEKAFAAGRIPGGYFKREGRPSERETLVSRLIDRPIRPLFPEGYRNETQVIVTVLAHDLENDPDILSMVASSAALTLSGVPFMGPVGAARVAYVNGQYKINPTLDEVKDTALDLVVAGTSDAVLMVESEAKELSEDVMLGAVMAGHSSFQPVIDAIIRLAEKAAKEPRDLILPDKTEVEVAVLAIAENDLREAYKITSKQDRYAAVDAVKAKVFGDLLPAEGEAKFPKDLVAEVFHDLQAKVVRWNILDNGIRIDGRDVKTVRPILAEVGILPRAHGSALFTRGETQALVVATLGTGEDEQLIDNLEGTYRERFLLHYNFPPYSVGEAGRMGSPGRREIGHGKLAWRAIHPMLPTPAEFPYTIRVVSEITESNGSSSMATVCGSSLALMDAGVPLKRPTAGIAMGLILEGERYAVLSDILGDEDHLGDMDFKVAGTEEGITSLQMDIKITGINEEIMRVALGQAKEGRLHILGEMAKAITGARAELGEFAPRIETLRIPTEKIREVIGTGGKVIREICEKTGAKINIEDDGTVKVASSDGNSIKAAINWIKSIATDPEVGHIYDGTVVKVVDFGAFVNFFGSKDGLVHISQLAKGRVAKTSDVVKEGDKVKVKLLGFDDRGKVRLSMRLVDQETGEDLEGKEPPQAEAGE.

Residues aspartate 489 and aspartate 495 each coordinate Mg(2+). One can recognise a KH domain in the interval 556 to 615 (PRIETLRIPTEKIREVIGTGGKVIREICEKTGAKINIEDDGTVKVASSDGNSIKAAINWI). In terms of domain architecture, S1 motif spans 625–693 (GHIYDGTVVK…DRGKVRLSMR (69 aa)).

This sequence belongs to the polyribonucleotide nucleotidyltransferase family. Mg(2+) serves as cofactor.

It localises to the cytoplasm. The enzyme catalyses RNA(n+1) + phosphate = RNA(n) + a ribonucleoside 5'-diphosphate. Its function is as follows. Involved in mRNA degradation. Catalyzes the phosphorolysis of single-stranded polyribonucleotides processively in the 3'- to 5'-direction. The polypeptide is Polyribonucleotide nucleotidyltransferase (Beijerinckia indica subsp. indica (strain ATCC 9039 / DSM 1715 / NCIMB 8712)).